We begin with the raw amino-acid sequence, 1015 residues long: Fibronectin-binding protein A (1015 aa).

An N-terminal signal peptide occupies residues 1 to 36 (MKNNLRYGIRKHKLGAASVFLGTMIVVGMGQDKEAA). The YSIRK-G/S signaling motif motif lies at 7-18 (YGIRKHKLGAAS). The tract at residues 37–512 (ASEQKTTTVE…SNKADGNGKN (476 aa)) is ligand-binding A region. Residues 75-92 (SYSATATEQPSNATQVTT) are compositionally biased toward polar residues. A disordered region spans residues 75–199 (SYSATATEQP…KVETGTDVTS (125 aa)). Basic and acidic residues predominate over residues 112-126 (TVKEEVVKEEAKPQV). Over residues 129–139 (TTQSQDNSGDQ) the composition is skewed to polar residues. Over residues 179–193 (DVVEAKEASDEKVET) the composition is skewed to basic and acidic residues. The fibrinogen/elastin/tropoelastin-binding stretch occupies residues 194–512 (GTDVTSKVTV…SNKADGNGKN (319 aa)). Residues 513 to 873 (GQIIQNNDFE…EGQQTIEEDT (361 aa)) are fibronectin-binding. The stretch at 546–575 (ENQDNTPLDIDYHTAIDGEGGYVDGYIETI) is one B-1 repeat. The tract at residues 546 to 605 (ENQDNTPLDIDYHTAIDGEGGYVDGYIETIEETDSSAIDIDYHTAVDSEAGHVGGYTESS) is 2 X approximate tandem repeats. The B-2 repeat unit spans residues 576–605 (EETDSSAIDIDYHTAVDSEAGHVGGYTESS). 4 disordered regions span residues 596–623 (GHVG…NSKH), 741–815 (LGYE…IDFD), 828–953 (EIIE…GKVV), and 966–992 (VAPT…NKGM). One copy of the D-1 repeat lies at 746 to 783 (GQNSGNQSFEEDTEEDKPKYEQGGNIVDIDFDSVPQIQ). Residues 746 to 875 (GQNSGNQSFE…QQTIEEDTTP (130 aa)) are 4 X approximate tandem repeats. Polar residues predominate over residues 780 to 791 (PQIQGQNNGNQS). The stretch at 784-821 (GQNNGNQSFEEDTEKDKPKYEQGGNIIDIDFDSVPQIH) is one D-2 repeat. The D-3 repeat unit spans residues 822 to 860 (GFNKHTEIIEEDTNKDKPNYQFGGHNSVDFEEDTLPKVS). Residues 828 to 839 (EIIEEDTNKDKP) are compositionally biased toward basic and acidic residues. The stretch at 861–875 (GQNEGQQTIEEDTTP) is one D-4; truncated repeat. Positions 875-935 (PPTPPTPEVP…PAEPGKPVPP (61 aa)) are enriched in pro residues. WR repeat units lie at residues 876-889 (PTPP…EPET), 890-903 (PTPP…EPET), 904-917 (PTPP…EPET), 918-931 (PTPP…EPGK), and 932-945 (PVPP…KPSK). Positions 876–945 (PTPPTPEVPS…AKEEPKKPSK (70 aa)) are 5 X tandem repeats, Pro-rich (WR). The LPXTG sorting signal signature appears at 979–983 (LPETG). Thr982 is subject to Pentaglycyl murein peptidoglycan amidated threonine. A propeptide spans 983–1015 (GGEESTNKGMLFGGLFSILGLALLRRNKKNNKA) (removed by sortase).

The protein resides in the secreted. Its subcellular location is the cell wall. Its function is as follows. Promotes bacterial attachment to multiple substrates, such as fibronectin (Fn), fibrinogen (Fg), elastin peptides and tropoelastin. This confers to S.aureus the ability to invade endothelial cells. Promotes adherence to and aggregation of activated platelets. This is Fibronectin-binding protein A (fnbA) from Staphylococcus aureus (strain MSSA476).